The following is a 427-amino-acid chain: Serine--tRNA ligase (427 aa).

230–232 (TAE) contributes to the L-serine binding site. 261–263 (RAE) is a binding site for ATP. Position 284 (E284) interacts with L-serine. 348–351 (EISS) contacts ATP. Residue S384 coordinates L-serine.

It belongs to the class-II aminoacyl-tRNA synthetase family. Type-1 seryl-tRNA synthetase subfamily. As to quaternary structure, homodimer. The tRNA molecule binds across the dimer.

It is found in the cytoplasm. It carries out the reaction tRNA(Ser) + L-serine + ATP = L-seryl-tRNA(Ser) + AMP + diphosphate + H(+). It catalyses the reaction tRNA(Sec) + L-serine + ATP = L-seryl-tRNA(Sec) + AMP + diphosphate + H(+). It participates in aminoacyl-tRNA biosynthesis; selenocysteinyl-tRNA(Sec) biosynthesis; L-seryl-tRNA(Sec) from L-serine and tRNA(Sec): step 1/1. Catalyzes the attachment of serine to tRNA(Ser). Is also able to aminoacylate tRNA(Sec) with serine, to form the misacylated tRNA L-seryl-tRNA(Sec), which will be further converted into selenocysteinyl-tRNA(Sec). This Moorella thermoacetica (strain ATCC 39073 / JCM 9320) protein is Serine--tRNA ligase.